The following is a 187-amino-acid chain: MNKKQRDEISKLLSYVLRHAPESMGLTLDRDGWCEVDELVGKANANGHSFDRQALEEVVETNEKKRFTLSEDGQRIRAAQGHSTEQVQVQHIEKEPPAWLYHGTASRFMASIETQGLIAGSRHHVHLTEDPETALSVGKRYGQPVLLAVDAKGMFEAGVQFFQADNGVWLVEAVPIEWLTKVADTVS.

The protein belongs to the KptA/TPT1 family.

Removes the 2'-phosphate from RNA via an intermediate in which the phosphate is ADP-ribosylated by NAD followed by a presumed transesterification to release the RNA and generate ADP-ribose 1''-2''-cyclic phosphate (APPR&gt;P). May function as an ADP-ribosylase. This is Probable RNA 2'-phosphotransferase from Pseudomonas syringae pv. tomato (strain ATCC BAA-871 / DC3000).